The sequence spans 491 residues: Limb region 1 homolog-like protein (491 aa).

Residues 1-20 (METEDVTVREQIFHDRVRET) lie on the Extracellular side of the membrane. Residues 21-41 (IICVLLFICLYILSHFILTHF) traverse the membrane as a helical segment. At 42–59 (KKSAEFVTDDIEDATVNK) the chain is on the cytoplasmic side. A helical transmembrane segment spans residues 60–80 (IALWLCTFTLSVAVCAVLLLP). Topologically, residues 81–111 (ISILSNEVLLTFPHSYYMQWLNGSLIRGLWN) are extracellular. The chain crosses the membrane as a helical span at residues 112–132 (LVFLFSNLSLVFLMPFAYFFT). At 133 to 152 (ESEGFAGSKKGVMARVYETA) the chain is on the cytoplasmic side. A helical transmembrane segment spans residues 153–173 (VMLLLLSLLVLGIVWVASALL). At 174–192 (HHNTARESLYDLWEYYLPY) the chain is on the extracellular side. Residues 193–213 (LYSGISLFGVLLLLLCTPFGL) traverse the membrane as a helical segment. Residues 214–292 (SRMFSVTGSL…RKRASPWQRN (79 aa)) lie on the Cytoplasmic side of the membrane. The chain crosses the membrane as a helical span at residues 293 to 313 (LVYPVAMLLLLALTAVSVLMV). Residues 314 to 346 (CFHVLELLFDESAMPRGMEDPHLGLASFSMLGS) are Extracellular-facing. The helical transmembrane segment at 347-367 (LGAAVQVVIILYLMVSSVVGF) threads the bilayer. At 368–384 (YSSPLFTGLLPRAQDTT) the chain is on the cytoplasmic side. Residues 385–405 (LTQIIGNCVSLLILSSALPVF) traverse the membrane as a helical segment. The Extracellular portion of the chain corresponds to 406 to 427 (SRTLGITKFDLLGDFGRHDWLG). A helical transmembrane segment spans residues 428–448 (SFHIVFLYNMLFAGLTSACLI). At 449–491 (NTVTWALQRELIRAFGLHRLPLTVSRSTIPLKLLLANGLSKIH) the chain is on the cytoplasmic side.

The protein belongs to the LIMR family. Dimer. Can also form higher oligomers.

It is found in the cell membrane. Its subcellular location is the endoplasmic reticulum membrane. Its function is as follows. May play a role in lymphocyte development by negatively regulating the canonical Wnt signaling pathway. May act as a LCN1 receptor. The polypeptide is Limb region 1 homolog-like protein (lmbr1l) (Danio rerio (Zebrafish)).